A 51-amino-acid polypeptide reads, in one-letter code: Insulin (51 aa).

3 cysteine pairs are disulfide-bonded: Cys-8–Cys-37, Cys-20–Cys-50, and Cys-36–Cys-41.

It belongs to the insulin family. As to quaternary structure, heterodimer of a B chain and an A chain linked by two disulfide bonds.

Its subcellular location is the secreted. Its function is as follows. Insulin decreases blood glucose concentration. It increases cell permeability to monosaccharides, amino acids and fatty acids. It accelerates glycolysis, the pentose phosphate cycle, and glycogen synthesis in liver. In Gadus morhua subsp. callarias (Baltic cod), this protein is Insulin (ins).